Reading from the N-terminus, the 89-residue chain is Small ribosomal subunit protein uS15 (89 aa).

The protein belongs to the universal ribosomal protein uS15 family. Part of the 30S ribosomal subunit. Forms a bridge to the 50S subunit in the 70S ribosome, contacting the 23S rRNA.

Functionally, one of the primary rRNA binding proteins, it binds directly to 16S rRNA where it helps nucleate assembly of the platform of the 30S subunit by binding and bridging several RNA helices of the 16S rRNA. In terms of biological role, forms an intersubunit bridge (bridge B4) with the 23S rRNA of the 50S subunit in the ribosome. The protein is Small ribosomal subunit protein uS15 of Hahella chejuensis (strain KCTC 2396).